Consider the following 357-residue polypeptide: Peptide chain release factor 1 (357 aa).

Q234 is modified (N5-methylglutamine).

The protein belongs to the prokaryotic/mitochondrial release factor family. In terms of processing, methylated by PrmC. Methylation increases the termination efficiency of RF1.

It localises to the cytoplasm. Peptide chain release factor 1 directs the termination of translation in response to the peptide chain termination codons UAG and UAA. This Arthrobacter sp. (strain FB24) protein is Peptide chain release factor 1.